Consider the following 71-residue polypeptide: Long neurotoxin 5 (71 aa).

5 disulfides stabilise this stretch: cysteine 3–cysteine 20, cysteine 14–cysteine 41, cysteine 26–cysteine 30, cysteine 45–cysteine 56, and cysteine 57–cysteine 62.

Belongs to the three-finger toxin family. Long-chain subfamily. Type II alpha-neurotoxin sub-subfamily. In terms of tissue distribution, expressed by the venom gland.

The protein localises to the secreted. Its function is as follows. Binds with high affinity to muscular (alpha-1/CHRNA1) and neuronal (alpha-7/CHRNA7) nicotinic acetylcholine receptor (nAChR) and inhibits acetylcholine from binding to the receptor, thereby impairing neuromuscular and neuronal transmission. In Naja naja (Indian cobra), this protein is Long neurotoxin 5.